A 302-amino-acid chain; its full sequence is Nucleotide-binding protein Bmul_0520/BMULJ_02739 (302 aa).

ATP is bound at residue 8–15; the sequence is GISGSGKS. 57–60 serves as a coordination point for GTP; sequence DARS.

This sequence belongs to the RapZ-like family.

Functionally, displays ATPase and GTPase activities. In Burkholderia multivorans (strain ATCC 17616 / 249), this protein is Nucleotide-binding protein Bmul_0520/BMULJ_02739.